Reading from the N-terminus, the 103-residue chain is Large ribosomal subunit protein eL21 (103 aa).

This sequence belongs to the eukaryotic ribosomal protein eL21 family.

In Sulfurisphaera tokodaii (strain DSM 16993 / JCM 10545 / NBRC 100140 / 7) (Sulfolobus tokodaii), this protein is Large ribosomal subunit protein eL21.